The primary structure comprises 456 residues: Bifunctional protein GlmU (456 aa).

A pyrophosphorylase region spans residues 1-229; that stretch reads MTKKALSAVI…VMEVEGANNR (229 aa). Residues 11–14, Lys25, Gln76, 81–82, 103–105, Gly140, Glu154, Asn169, and Asn227 contribute to the UDP-N-acetyl-alpha-D-glucosamine site; these read LAAG, GT, and YGD. Mg(2+) is bound at residue Asp105. Mg(2+) is bound at residue Asn227. Residues 230-250 form a linker region; that stretch reads LQLAALERYLQNKQASKLLLE. The N-acetyltransferase stretch occupies residues 251-456; that stretch reads GVMIYDPARF…QGWQRPIKKK (206 aa). Positions 333 and 351 each coordinate UDP-N-acetyl-alpha-D-glucosamine. His363 (proton acceptor) is an active-site residue. 2 residues coordinate UDP-N-acetyl-alpha-D-glucosamine: Tyr366 and Asn377. Residues Ala380, 386 to 387, Ser405, Ala423, and Arg440 contribute to the acetyl-CoA site; that span reads NY.

This sequence in the N-terminal section; belongs to the N-acetylglucosamine-1-phosphate uridyltransferase family. In the C-terminal section; belongs to the transferase hexapeptide repeat family. In terms of assembly, homotrimer. Mg(2+) is required as a cofactor.

The protein resides in the cytoplasm. The enzyme catalyses alpha-D-glucosamine 1-phosphate + acetyl-CoA = N-acetyl-alpha-D-glucosamine 1-phosphate + CoA + H(+). It catalyses the reaction N-acetyl-alpha-D-glucosamine 1-phosphate + UTP + H(+) = UDP-N-acetyl-alpha-D-glucosamine + diphosphate. The protein operates within nucleotide-sugar biosynthesis; UDP-N-acetyl-alpha-D-glucosamine biosynthesis; N-acetyl-alpha-D-glucosamine 1-phosphate from alpha-D-glucosamine 6-phosphate (route II): step 2/2. It participates in nucleotide-sugar biosynthesis; UDP-N-acetyl-alpha-D-glucosamine biosynthesis; UDP-N-acetyl-alpha-D-glucosamine from N-acetyl-alpha-D-glucosamine 1-phosphate: step 1/1. It functions in the pathway bacterial outer membrane biogenesis; LPS lipid A biosynthesis. Functionally, catalyzes the last two sequential reactions in the de novo biosynthetic pathway for UDP-N-acetylglucosamine (UDP-GlcNAc). The C-terminal domain catalyzes the transfer of acetyl group from acetyl coenzyme A to glucosamine-1-phosphate (GlcN-1-P) to produce N-acetylglucosamine-1-phosphate (GlcNAc-1-P), which is converted into UDP-GlcNAc by the transfer of uridine 5-monophosphate (from uridine 5-triphosphate), a reaction catalyzed by the N-terminal domain. The protein is Bifunctional protein GlmU of Haemophilus influenzae (strain PittGG).